The sequence spans 124 residues: Fluoride-specific ion channel FluC (124 aa).

The next 4 membrane-spanning stretches (helical) occupy residues Leu-6–Val-26, Leu-37–Ala-57, Thr-69–Val-89, and Gly-92–Val-112. Na(+) contacts are provided by Gly-73 and Thr-76.

This sequence belongs to the fluoride channel Fluc/FEX (TC 1.A.43) family.

Its subcellular location is the cell membrane. The enzyme catalyses fluoride(in) = fluoride(out). Na(+) is not transported, but it plays an essential structural role and its presence is essential for fluoride channel function. Fluoride-specific ion channel. Important for reducing fluoride concentration in the cell, thus reducing its toxicity. The chain is Fluoride-specific ion channel FluC from Methanocaldococcus jannaschii (strain ATCC 43067 / DSM 2661 / JAL-1 / JCM 10045 / NBRC 100440) (Methanococcus jannaschii).